We begin with the raw amino-acid sequence, 960 residues long: Valine--tRNA ligase (960 aa).

Residues 42–52 (PNITGNLHMGH) carry the 'HIGH' region motif. A 'KMSKS' region motif is present at residues 553 to 557 (KMSKS). Lys-556 is an ATP binding site. Residues 879–950 (VLKAIDKEIE…LSQQLESLHD (72 aa)) adopt a coiled-coil conformation.

Belongs to the class-I aminoacyl-tRNA synthetase family. ValS type 1 subfamily. As to quaternary structure, monomer.

It is found in the cytoplasm. It catalyses the reaction tRNA(Val) + L-valine + ATP = L-valyl-tRNA(Val) + AMP + diphosphate. Its function is as follows. Catalyzes the attachment of valine to tRNA(Val). As ValRS can inadvertently accommodate and process structurally similar amino acids such as threonine, to avoid such errors, it has a 'posttransfer' editing activity that hydrolyzes mischarged Thr-tRNA(Val) in a tRNA-dependent manner. This is Valine--tRNA ligase from Buchnera aphidicola subsp. Schizaphis graminum (strain Sg).